Consider the following 475-residue polypeptide: MNTALAQQIANEGGVEAWMIAQQHKSLLRFLTCGSVDDGKSTLIGRLLHDTRQIYEDQLSSLHNDSKRHGTQGEKLDLALLVDGLQAEREQGITIDVAYRYFSTEKRKFIIADTPGHEQYTRNMATGASTCELAILLIDARKGVLDQTRRHSFISTLLGIKHLVVAINKMDLVDYSEETFTRIREDYLTFAEQLPGNLDIRFVPLSALEGDNVASQSESMPWYSGPTLLEVLETVEIQRVVDAQPMRFPVQYVNRPNLDFRGYAGTLASGRVEVGQRVKVLPSGVESNVARIVTFDGDREEAFAGEAITLVLTDEIDISRGDLLLAADEALPAVQSASVDVVWMAEQPLSPGQSYDIKIAGKKTRARVDGIRYQVDINNLTQREVENLPLNGIGLVDLTFDEPLVLDRYQQNPVTGGLIFIDRLSNVTVGAGMVHEPVSQATAAPSEFSAFELELNALVRRHFPHWGARDLLGDK.

The tr-type G domain maps to 25 to 239 (KSLLRFLTCG…EVLETVEIQR (215 aa)). The interval 34–41 (GSVDDGKS) is G1. Residue 34–41 (GSVDDGKS) participates in GTP binding. The tract at residues 92–96 (GITID) is G2. The tract at residues 113–116 (DTPG) is G3. Residues 113-117 (DTPGH) and 168-171 (NKMD) contribute to the GTP site. Positions 168 to 171 (NKMD) are G4. The segment at 206–208 (SAL) is G5.

The protein belongs to the TRAFAC class translation factor GTPase superfamily. Classic translation factor GTPase family. CysN/NodQ subfamily. As to quaternary structure, heterodimer composed of CysD, the smaller subunit, and CysN.

It catalyses the reaction sulfate + ATP + H(+) = adenosine 5'-phosphosulfate + diphosphate. It participates in sulfur metabolism; hydrogen sulfide biosynthesis; sulfite from sulfate: step 1/3. With CysD forms the ATP sulfurylase (ATPS) that catalyzes the adenylation of sulfate producing adenosine 5'-phosphosulfate (APS) and diphosphate, the first enzymatic step in sulfur assimilation pathway. APS synthesis involves the formation of a high-energy phosphoric-sulfuric acid anhydride bond driven by GTP hydrolysis by CysN coupled to ATP hydrolysis by CysD. This chain is Sulfate adenylyltransferase subunit 1, found in Escherichia coli (strain 55989 / EAEC).